The following is a 141-amino-acid chain: Albumin-8 (141 aa).

A signal peptide spans 1–25; it reads MARFSIVFAAAGVLLLVAMAPVSEA. Residues 26–38 constitute a propeptide that is removed on maturation; that stretch reads STTTIITTIIEEN. 4 cysteine pairs are disulfide-bonded: Cys-49–Cys-100, Cys-62–Cys-89, Cys-90–Cys-132, and Cys-102–Cys-139.

This sequence belongs to the 2S seed storage albumins family. In terms of assembly, heterodimer; disulfide-linked.

This is a 2S seed storage protein. This Helianthus annuus (Common sunflower) protein is Albumin-8.